Reading from the N-terminus, the 927-residue chain is Ribosome-releasing factor 2, mitochondrial (927 aa).

The transit peptide at 1–57 (MVTAPLLGWVAVRPIPRLSKLNTCKYVSSSLQSYKRSVGSCLGKQQSRDFSYSATLT) directs the protein to the mitochondrion. A tr-type G domain is found at 64–379 (EKTRNIGIIA…AVNNLLPGPS (316 aa)). Residues 73-80 (AHIDAGKT), 163-167 (DTPGH), and 217-220 (NKLD) each bind GTP.

The protein belongs to the TRAFAC class translation factor GTPase superfamily. Classic translation factor GTPase family. EF-G/EF-2 subfamily.

It localises to the mitochondrion. Mitochondrial GTPase that mediates the disassembly of ribosomes from messenger RNA at the termination of mitochondrial protein biosynthesis. Not involved in the GTP-dependent ribosomal translocation step during translation elongation. This is Ribosome-releasing factor 2, mitochondrial (mef2) from Talaromyces marneffei (strain ATCC 18224 / CBS 334.59 / QM 7333) (Penicillium marneffei).